The primary structure comprises 460 residues: MSFKFDWESLRDESFYERAKTILADALNSDSKPPIIVDDITVKDLDLGDESPFLEILEIGDMADDRFRGIFKLNYTGNASLTLTTKVQANPLNVYRQSFDQSSFVAPQFLAAGSSLAIPLNLTLSDIRLSGIIILVFSRAKGLTLVFRNDPLESIKVSSTFDAIPPLAKFLQVQIENQIRGLFRELLPGIIHRLSQKWVTRDETKSNSNTVMSPHVTQPPSPKLKPVSIMDINPDLPALSPTNMLKISALCASQRTLSLFTPSISDAVYRSNLEQFDVVDEESQFQSEDPYDIVRIQSRNYYRHNHQAPKRRTIKYKRKSKKTDEGDNASTEVTTRETTPLPTSSTPLETSTPSREVIREVKEKLLAEPSSVVMSPSEEKTTLRSIPPPLELSPPSLDLSIDTSLRPYASRNNTPEKKEKPQRPAGPSKRNTLPAPTKKGPGFFSSNLAGYDVPPPAYSG.

The region spanning 1-196 (MSFKFDWESL…LPGIIHRLSQ (196 aa)) is the SMP-LTD domain. The span at 304–321 (HNHQAPKRRTIKYKRKSK) shows a compositional bias: basic residues. 2 disordered regions span residues 304-356 (HNHQ…PSRE) and 368-460 (EPSS…AYSG). 2 stretches are compositionally biased toward low complexity: residues 330-355 (STEV…TPSR) and 393-405 (SPPS…DTSL).

The protein belongs to the MDM34 family. Component of the ER-mitochondria encounter structure (ERMES) or MDM complex, composed of MMM1, MDM10, MDM12 and MDM34.

The protein localises to the mitochondrion outer membrane. Functionally, component of the ERMES/MDM complex, which serves as a molecular tether to connect the endoplasmic reticulum (ER) and mitochondria. Components of this complex are involved in the control of mitochondrial shape and protein biogenesis, and function in nonvesicular lipid trafficking between the ER and mitochondria. MDM34 is required for the interaction of the ER-resident membrane protein MMM1 and the outer mitochondrial membrane-resident beta-barrel protein MDM10. In Yarrowia lipolytica (strain CLIB 122 / E 150) (Yeast), this protein is Mitochondrial distribution and morphology protein 34.